We begin with the raw amino-acid sequence, 424 residues long: Tyrosine--tRNA ligase (424 aa).

Tyr-37 lines the L-tyrosine pocket. Residues 42 to 51 carry the 'HIGH' region motif; the sequence is PTADSLHLGH. Residues Tyr-175 and Gln-179 each contribute to the L-tyrosine site. The 'KMSKS' region motif lies at 235-239; that stretch reads KFGKT. Residue Lys-238 participates in ATP binding. The region spanning 357-414 is the S4 RNA-binding domain; that stretch reads ADLMQALVDAELQPSRGQARKTIASNAVTINGEKQSDPEYIFNDEDRLFGRYTLLRRG.

This sequence belongs to the class-I aminoacyl-tRNA synthetase family. TyrS type 1 subfamily. In terms of assembly, homodimer.

It is found in the cytoplasm. The catalysed reaction is tRNA(Tyr) + L-tyrosine + ATP = L-tyrosyl-tRNA(Tyr) + AMP + diphosphate + H(+). Functionally, catalyzes the attachment of tyrosine to tRNA(Tyr) in a two-step reaction: tyrosine is first activated by ATP to form Tyr-AMP and then transferred to the acceptor end of tRNA(Tyr). The protein is Tyrosine--tRNA ligase of Salmonella enteritidis PT4 (strain P125109).